We begin with the raw amino-acid sequence, 135 residues long: uncharacterized protein (135 aa).

This is an uncharacterized protein from Homo sapiens (Human).